The following is a 257-amino-acid chain: Cytoplasmic envelopment protein 1 (257 aa).

This sequence belongs to the herpesviridae cytoplasmic envelopment protein 1 family.

The protein resides in the virion. The protein localises to the virion tegument. It localises to the host cytoplasm. It is found in the host Golgi apparatus. In terms of biological role, plays a critical role in cytoplasmic virus egress. Participates in the final step of tegumentation and envelope acquisition within the host cytoplasm. This Connochaetes taurinus (Blue wildebeest) protein is Cytoplasmic envelopment protein 1 (42).